The sequence spans 429 residues: Acetyltransferase pyr8 (429 aa).

Transmembrane regions (helical) follow at residues 12–32 (IAQE…VIIT), 39–56 (LRLA…RFSL), 69–89 (GVAA…LLIT), 154–174 (YVLR…LIHM), 221–241 (VCLN…RISA), 300–320 (IFFT…ILGI), 324–344 (GSGA…EDGV), 365–385 (LVGF…YLYP), and 409–429 (VAQK…GGEI).

It belongs to the wax synthase family.

It localises to the membrane. The protein operates within secondary metabolite biosynthesis; terpenoid biosynthesis. In terms of biological role, acetyltransferase; part of the gene cluster that mediates the biosynthesis of pyripyropene A, a specific human acyl-coenzyme A:cholesterol acyltransferase 2 inhibitor. The first step of the pathway is the synthesis of nicotinyl-CoA from nicotinic acid by the nicotinic acid-CoA ligase pyr1. Nicotinyl-CoA is then a substrate of polyketide synthase pyr2 to produce 4-hydroxy-6-(3-pyridinyl)-2H-pyran-2-one (HPPO) which is further prenylated by the polyprenyl transferase pyr6 to yield farnesyl-HPPO. The next steps consist of an epoxidation of farnesyl-HPPO to epoxyfarnesyl-HPPO by FAD-dependent monooxygenase pyr5 and a cyclization of the terpenoid portion by the terpene cyclase pyr4 to yield deacetyl-pyripyropene E. The 2 cytochrome P450 monooxygenases pyr3 and pyr9, and the 2 acetyltransferases pyr7 and pyr8 are involved in the conversion of deacetyl-pyripyropene E into pyripyropene A through several cycles of oxidation and acetylation steps. Pyr7 acetylates deacetyl-pyripyropene E to pyripyropene E which is oxidized to 11-deacetyl-pyripyropene O by pyr3, which is in turn acetylated into pyripyropene O by pyr8. Pyripyropene O is then oxidized to deacetyl-pyripyropene A by pyr9. Deacetyl-pyripyropene A is finally acetylated to pyripyropene A by pyr8. The chain is Acetyltransferase pyr8 from Aspergillus fumigatus (strain ATCC MYA-4609 / CBS 101355 / FGSC A1100 / Af293) (Neosartorya fumigata).